The following is a 603-amino-acid chain: T-cell surface protein tactile (603 aa).

The first 21 residues, 1–21 (MGRKWTYCVVYAIIQIQFFRG), serve as a signal peptide directing secretion. The Extracellular portion of the chain corresponds to 22–537 (AWEELFNAGD…ITVNKPRDGM (516 aa)). Ig-like V-type domains are found at residues 24 to 132 (EELF…KTIV) and 139 to 245 (PYTQ…STTV). N43, N108, N146, N154, N164, N197, N259, N307, N324, N331, N349, N371, N416, N425, and N437 each carry an N-linked (GlcNAc...) asparagine glycan. C46 and C119 are joined by a disulfide. Residues C161 and C229 are joined by a disulfide bond. The Ig-like C2-type domain occupies 251-356 (PEILMTVENT…MWNTSSQPIT (106 aa)). Cysteines 272 and 336 form a disulfide. 2 disordered regions span residues 359–383 (LDSGTAPTKRLPNVTGSTLGAQTFP) and 403–482 (ENVL…WIPT). Residues 412-436 (PQTSNSSMTTKDVNYSQPSSGTDAK) show a composition bias toward polar residues. Residues 438-450 (SSRAASSSDGGSR) show a composition bias toward low complexity. The N-linked (GlcNAc...) asparagine glycan is linked to N515. The helical transmembrane segment at 538 to 558 (SWPVAVATLLFFCILLFGLGV) threads the bilayer. At 559–603 (RKWCQYQKEIMERPPPFKPPPPPIKYMCIQEPTGRGMPCHEMEVL) the chain is on the cytoplasmic side.

In terms of assembly, homodimer; disulfide-linked. Interacts with PVR.

It localises to the membrane. Its function is as follows. May be involved in adhesive interactions of activated T and NK cells during the late phase of the immune response. Promotes NK cell-target adhesion by interacting with PVR present on target cells. May function at a time after T and NK cells have penetrated the endothelium using integrins and selectins, when they are actively engaging diseased cells and moving within areas of inflammation. The chain is T-cell surface protein tactile (Cd96) from Rattus norvegicus (Rat).